A 149-amino-acid polypeptide reads, in one-letter code: Hut operon positive regulatory protein (149 aa).

Belongs to the HutP family. In terms of assembly, homohexamer.

Functionally, antiterminator that binds to cis-acting regulatory sequences on the mRNA in the presence of histidine, thereby suppressing transcription termination and activating the hut operon for histidine utilization. This Geobacillus sp. (strain WCH70) protein is Hut operon positive regulatory protein.